The sequence spans 200 residues: Probable molybdenum cofactor guanylyltransferase (200 aa).

GTP is bound by residues 9–11, Lys-21, Asp-69, and Asp-100; that span reads LAG. Mg(2+) is bound at residue Asp-100.

It belongs to the MobA family. It depends on Mg(2+) as a cofactor.

The protein resides in the cytoplasm. It catalyses the reaction Mo-molybdopterin + GTP + H(+) = Mo-molybdopterin guanine dinucleotide + diphosphate. Functionally, transfers a GMP moiety from GTP to Mo-molybdopterin (Mo-MPT) cofactor (Moco or molybdenum cofactor) to form Mo-molybdopterin guanine dinucleotide (Mo-MGD) cofactor. The chain is Probable molybdenum cofactor guanylyltransferase from Bacillus thuringiensis (strain Al Hakam).